The chain runs to 262 residues: Cytochrome c oxidase subunit 3 (262 aa).

6 helical membrane passes run 39 to 59 (YDIS…YQWW), 83 to 103 (GMIL…WAFF), 120 to 140 (MGII…ILLA), 163 to 183 (GLFF…YEYI), 201 to 221 (ATGF…VCLL), and 240 to 260 (AWYW…IYWW).

The protein belongs to the cytochrome c oxidase subunit 3 family. As to quaternary structure, component of the cytochrome c oxidase (complex IV, CIV), a multisubunit enzyme composed of a catalytic core of 3 subunits and several supernumerary subunits. The complex exists as a monomer or a dimer and forms supercomplexes (SCs) in the inner mitochondrial membrane with ubiquinol-cytochrome c oxidoreductase (cytochrome b-c1 complex, complex III, CIII).

It is found in the mitochondrion inner membrane. The catalysed reaction is 4 Fe(II)-[cytochrome c] + O2 + 8 H(+)(in) = 4 Fe(III)-[cytochrome c] + 2 H2O + 4 H(+)(out). Component of the cytochrome c oxidase, the last enzyme in the mitochondrial electron transport chain which drives oxidative phosphorylation. The respiratory chain contains 3 multisubunit complexes succinate dehydrogenase (complex II, CII), ubiquinol-cytochrome c oxidoreductase (cytochrome b-c1 complex, complex III, CIII) and cytochrome c oxidase (complex IV, CIV), that cooperate to transfer electrons derived from NADH and succinate to molecular oxygen, creating an electrochemical gradient over the inner membrane that drives transmembrane transport and the ATP synthase. Cytochrome c oxidase is the component of the respiratory chain that catalyzes the reduction of oxygen to water. Electrons originating from reduced cytochrome c in the intermembrane space (IMS) are transferred via the dinuclear copper A center (CU(A)) of subunit 2 and heme A of subunit 1 to the active site in subunit 1, a binuclear center (BNC) formed by heme A3 and copper B (CU(B)). The BNC reduces molecular oxygen to 2 water molecules using 4 electrons from cytochrome c in the IMS and 4 protons from the mitochondrial matrix. This Drosophila yakuba (Fruit fly) protein is Cytochrome c oxidase subunit 3 (mt:CoIII).